Consider the following 269-residue polypeptide: Pertussis toxin subunit 1 homolog (269 aa).

A signal peptide spans 1-34 (MRCTRAIRQTARTGWLTWLAILAVTAPMTSPAWA).

It belongs to the bacterial exotoxin subunit A family.

The protein is Pertussis toxin subunit 1 homolog (ptxA) of Bordetella parapertussis (strain 12822 / ATCC BAA-587 / NCTC 13253).